Consider the following 206-residue polypeptide: Methyltransferase-like 26 (206 aa).

It belongs to the UPF0585 family.

In Danio rerio (Zebrafish), this protein is Methyltransferase-like 26.